The primary structure comprises 8515 residues: Nonribosomal peptide synthetase 8 (8515 aa).

Adenylation stretches follow at residues 59 to 736 and 1163 to 1705; these read REHH…YRCS and AKLS…EWVE. The tract at residues 587-1159 is condensation 1; it reads RRVVQWLENL…TVGEVALVGD (573 aa). The Carrier 1 domain occupies 615–691; it reads EPETAMERRL…ELAPRVKVAE (77 aa). Serine 652 is modified (O-(pantetheine 4'-phosphoryl)serine). The Carrier 2 domain occupies 1732 to 1808; the sequence is RGLTPTETVI…KLGRHADHSS (77 aa). Serine 1769 carries the O-(pantetheine 4'-phosphoryl)serine modification. Residues 1830-2273 are epimerase 1; the sequence is LSPIQQWFFE…TLYDCPLAAL (444 aa). Positions 2301-2709 are condensation 2; it reads SHIQEGILLS…RSPEAVLHDL (409 aa). An adenylation 3 region spans residues 2733–3266; the sequence is QCLHWLIEQW…RMILSWLSEP (534 aa). The 77-residue stretch at 3286 to 3362 folds into the Carrier 3 domain; that stretch reads TTLGPVEKQM…KVTPRTISLS (77 aa). Serine 3323 is subject to O-(pantetheine 4'-phosphoryl)serine. A condensation 3 region spans residues 3406 to 3819; it reads SPMQEGILLA…DNSGCSVKTV (414 aa). The Carrier 4 domain occupies 3857–3933; sequence EPTNLIALTV…EVFEHARFSD (77 aa). Serine 3894 is subject to O-(pantetheine 4'-phosphoryl)serine. The segment at 3953–4392 is epimerase 2; that stretch reads LSPIQKLHFH…TPSDFQLLSL (440 aa). Residues 4420–4823 form a condensation 4 region; that stretch reads PCSPMQEGIL…ARPRARLGTI (404 aa). The interval 4837–5363 is adenylation 4; that stretch reads WNEQARRPVV…RKVNKWLESF (527 aa). A Carrier 5 domain is found at 5385–5461; sequence PPLTPIQQTI…SLAACATAII (77 aa). Serine 5422 is subject to O-(pantetheine 4'-phosphoryl)serine. The tract at residues 5508 to 5923 is condensation 5; the sequence is SPMQEGILFS…SLVDHLSLCS (416 aa). The adenylation 5 stretch occupies residues 5941–6459; it reads ELRQCLHELI…GKVDRQALRR (519 aa). The 77-residue stretch at 6482–6558 folds into the Carrier 6 domain; that stretch reads PISTAEEQQM…DLATLLESPA (77 aa). Serine 6519 bears the O-(pantetheine 4'-phosphoryl)serine mark. The segment at 6606-6992 is condensation 6; it reads CTPLQESLMA…SQMKSVMGTL (387 aa). The segment at 7030-7544 is adenylation 6; the sequence is VEDLIISRAQ…SSGKLARKGV (515 aa). The Carrier 7 domain maps to 7575–7651; that stretch reads IASSSVERAI…HLASREDLTA (77 aa). At serine 7612 the chain carries O-(pantetheine 4'-phosphoryl)serine. Residues 7670–8119 form an epimerase 3 region; it reads LTPIQRFFFC…DYPRARLDYT (450 aa). The condensation 7 stretch occupies residues 8164 to 8504; that stretch reads HFIWKIAGTK…DPTSPLQFAD (341 aa). The span at 8488 to 8500 shows a compositional bias: polar residues; it reads AVNSVSSDPTSPL. Positions 8488-8515 are disordered; that stretch reads AVNSVSSDPTSPLQFADGQDPMPVSHQP.

Belongs to the NRP synthetase family.

In terms of biological role, nonribosomal peptide synthesis (NRPS) is a key mechanism responsible for the biosynthesis of bioactive metabolites which are potentially contributing to organismal virulence. However, contarary to other nonribosomal peptide synthases, NRPS8 does not encode a secreted peptide, but has more a structural role since it is involved in germ tube formation. The chain is Nonribosomal peptide synthetase 8 (NRPS8) from Aspergillus fumigatus (strain ATCC MYA-4609 / CBS 101355 / FGSC A1100 / Af293) (Neosartorya fumigata).